Reading from the N-terminus, the 725-residue chain is Antigen peptide transporter 1 (725 aa).

At 1-8 (MAAHAWPT) the chain is on the cytoplasmic side. A helical membrane pass occupies residues 9 to 29 (AALLLLLVDWLLLRPVLPGIF). The Lumenal segment spans residues 30–38 (SLLVPEVPL). The chain crosses the membrane as a helical span at residues 39 to 60 (LRVWAVGLSRWAILGLGVRGVL). Residues 61–67 (GVTAGAR) lie on the Cytoplasmic side of the membrane. A helical membrane pass occupies residues 68-88 (GWLAALQPLVAALGLALPGLA). Over 89-110 (SFRKLSAWGALREGDNAGLLHW) the chain is Lumenal. Residues 111–131 (NSRLDAFVLSYVAALPAAALW) form a helical membrane-spanning segment. The Cytoplasmic segment spans residues 132 to 163 (HKLGGFWAPSGHKGAGDMLCRMLGFLDSKKGR). The chain crosses the membrane as a helical span at residues 164–184 (LHLVLVLLILSCLGEMAIPFF). The ABC transmembrane type-1 domain maps to 164–447 (LHLVLVLLIL…LLSIYPSMQK (284 aa)). Residues 185–204 (TGRITDWILQDKTAPSFARN) are Lumenal-facing. Residues 205 to 225 (MWLMCILTIASTVLEFAGDGI) traverse the membrane as a helical segment. At 226–275 (YNITMGHMHSRVHGEVFRAVLHQETGFFLKNPTGSITSRVTEDTSNVCES) the chain is on the cytoplasmic side. Residues 276 to 296 (ISDKLNLFLWYLGRGLCLLAF) form a helical membrane-spanning segment. Topologically, residues 297–305 (MIWGSFYLT) are lumenal. Residues 306 to 326 (VVTLLSLPLLFLLPRRLGKVY) traverse the membrane as a helical segment. At 327–395 (QSLAVKVQES…VTEVWTMSVS (69 aa)) the chain is on the cytoplasmic side. The tract at residues 352–397 (PTVRSFANEEGEAQKFRQKLEEMKPLNKKEALAYVTEVWTMSVSGM) is part of the peptide-binding site. The helical transmembrane segment at 396–416 (GMLLKVGILYLGGQLVVRGAV) threads the bilayer. Residues 417-420 (SSGN) lie on the Lumenal side of the membrane. The chain crosses the membrane as a helical span at residues 421 to 441 (LVSFVLYQLQFTRAVEVLLSI). The segment at 430-464 (QFTRAVEVLLSIYPSMQKSVGASEKIFEYLDRTPC) is part of the peptide-binding site. The Cytoplasmic segment spans residues 442-725 (YPSMQKSVGA…MVEALAAPSD (284 aa)). The 240-residue stretch at 480–719 (VKFQDVSFAY…GGCYRSMVEA (240 aa)) folds into the ABC transporter domain. ATP-binding positions include 515 to 523 (GPNGSGKST), 618 to 624 (NQLSGGQ), and Gln678. Ser522 contributes to the Mg(2+) binding site.

This sequence belongs to the ABC transporter superfamily. ABCB family. MHC peptide exporter (TC 3.A.1.209) subfamily. Heterodimer of TAP1 and TAP2 (TAP1-TAP2). A component of the peptide loading complex (PLC), interacts via TAPBP with MHCI heterodimer; this interaction mediates peptide-MHCI assembly. Interacts with PSMB5 and PSMB8. The cofactor is Mg(2+).

The protein resides in the endoplasmic reticulum membrane. The catalysed reaction is a peptide antigen(in) + ATP + H2O = a peptide antigen(out) + ADP + phosphate + H(+). In terms of biological role, ABC transporter associated with antigen processing. In complex with TAP2 mediates unidirectional translocation of peptide antigens from cytosol to endoplasmic reticulum (ER) for loading onto MHC class I (MHCI) molecules. Uses the chemical energy of ATP to export peptides against the concentration gradient. During the transport cycle alternates between 'inward-facing' state with peptide binding site facing the cytosol to 'outward-facing' state with peptide binding site facing the ER lumen. Peptide antigen binding to ATP-loaded TAP1-TAP2 induces a switch to hydrolysis-competent 'outward-facing' conformation ready for peptide loading onto nascent MHCI molecules. Subsequently ATP hydrolysis resets the transporter to the 'inward facing' state for a new cycle. As a component of the peptide loading complex (PLC), acts as a molecular scaffold essential for peptide-MHCI assembly and antigen presentation. In Rattus norvegicus (Rat), this protein is Antigen peptide transporter 1 (Tap1).